The sequence spans 40 residues: Cytochrome c3 hydrogenase small chain (40 aa).

Fe cation serves as cofactor.

The catalysed reaction is 2 Fe(III)-[cytochrome c3] + H2 = 2 Fe(II)-[cytochrome c3] + 2 H(+). This chain is Cytochrome c3 hydrogenase small chain (hoxK), found in Acidithiobacillus ferrooxidans (Thiobacillus ferrooxidans).